Here is a 317-residue protein sequence, read N- to C-terminus: HTH-type transcriptional repressor PA14_22550 (317 aa).

The HTH lysR-type domain maps to 1 to 59; sequence MDKLTAMATFVKVVDAGSFTRAADALGLPKARVSQRVSDLEKHLGVRLLNRTTRALSLT. The H-T-H motif DNA-binding region spans 19–38; that stretch reads FTRAADALGLPKARVSQRVS.

Belongs to the LysR transcriptional regulatory family.

Functionally, represses the transcription of the operon that consists of PA14_22510 to PA14_22540. The chain is HTH-type transcriptional repressor PA14_22550 from Pseudomonas aeruginosa (strain UCBPP-PA14).